The sequence spans 311 residues: MQDLAKTKINIKSPAKINLHLEVIGKREDGFHELAMIMQNIDLSDYLEFEINNEGLIKLESDCNDLSLSDDNLIVKSANLLRKKSNIDYGANIFLRKNIPIGAGLAGGSSNSAATLIGLNKLWDLNLGQEALCSLASTLGSDIPFFINGGIQLCFGRGEVLEKLDSNFEYGVILLKNPNVSVSTAETYKKYSNRFCHQYLTDREMIENIRKNLRENGLNNLNLDNQHLSIKNDLQLVVENENDSVKQALYLLSKLENCLTFSMSGSGPTCFALFKDIETAKKELTANYKLFRNKGYDSWVCTFLEKGITFI.

The active site involves K16. 100-110 contributes to the ATP binding site; the sequence is PIGAGLAGGSS. Residue D142 is part of the active site.

This sequence belongs to the GHMP kinase family. IspE subfamily.

The enzyme catalyses 4-CDP-2-C-methyl-D-erythritol + ATP = 4-CDP-2-C-methyl-D-erythritol 2-phosphate + ADP + H(+). The protein operates within isoprenoid biosynthesis; isopentenyl diphosphate biosynthesis via DXP pathway; isopentenyl diphosphate from 1-deoxy-D-xylulose 5-phosphate: step 3/6. Catalyzes the phosphorylation of the position 2 hydroxy group of 4-diphosphocytidyl-2C-methyl-D-erythritol. The protein is 4-diphosphocytidyl-2-C-methyl-D-erythritol kinase of Prochlorococcus marinus (strain MIT 9312).